Reading from the N-terminus, the 152-residue chain is MFDVLTYLFEQYSDPAAFGDRSALTRQLNAVGFDDDDIGEALDWLDSVGEASVEPYLGADEGSGLRIYADSELEYLSPDVRGLIQFLEDNGALSPAQREMVIDRLLELDPEDLDIDTAKLLVLMVLWAQQAELPILLGEALLEAVHGEPTMQ.

This sequence belongs to the Smg family.

This Chromobacterium violaceum (strain ATCC 12472 / DSM 30191 / JCM 1249 / CCUG 213 / NBRC 12614 / NCIMB 9131 / NCTC 9757 / MK) protein is Protein Smg homolog.